The sequence spans 1890 residues: Callose synthase 9 (1890 aa).

Topologically, residues 1 to 489 (MSRAESSWER…EHRTFLHLYH (489 aa)) are cytoplasmic. The chain crosses the membrane as a helical span at residues 490-510 (SFHRLWIFLAMMFQALAIIAF). Topologically, residues 511–523 (NKDDLTSRKTLLQ) are extracellular. The helical transmembrane segment at 524-544 (ILSLGPTFVVMKFSESVLEVI) threads the bilayer. Over 545–560 (MMYGAYSTTRRLAVSR) the chain is Cytoplasmic. A helical membrane pass occupies residues 561–581 (IFLRFIWFGLASVFISFLYVK). At 582 to 591 (SLKAPNSDSP) the chain is on the extracellular side. Residues 592–612 (IVQLYLIVIAIYGGVQFFFSI) form a helical membrane-spanning segment. Over 613–658 (LMRIPTCHNIANKCDRWPVIRFFKWMRQERHYVGRGMYERTSDFIK) the chain is Cytoplasmic. A helical membrane pass occupies residues 659–679 (YLLFWLVVLSAKFSFAYFLQI). The Extracellular segment spans residues 680–722 (KPLVGPTRMIVKQNNIPYSWHDFVSRKNYNALTVASLWAPVVA). The helical transmembrane segment at 723–743 (IYLLDIHIFYTIFSAFLGFLL) threads the bilayer. Residues 744–1457 (GARDRLGEIR…QLLDFFRMMS (714 aa)) lie on the Cytoplasmic side of the membrane. Residues 1458 to 1478 (FFFTTVGFYLCTMLTVLTVYI) form a helical membrane-spanning segment. At 1479–1512 (FLYGRAYLALSGVGATIRERAILLDDTALSAALN) the chain is on the extracellular side. A helical membrane pass occupies residues 1513–1533 (AQFLFQIGVFTAVPMVLGFIL). At 1534 to 1539 (EQGFLQ) the chain is on the cytoplasmic side. Residues 1540-1560 (AIVSFITMQFQLCTVFFTFSL) form a helical membrane-spanning segment. At 1561–1609 (GTRTHYFGRTILHGGARYQATGRGFVVKHIKFSENYRLYSRSHFVKAME) the chain is on the extracellular side. Helical transmembrane passes span 1610–1630 (VILL…AVSY) and 1631–1651 (ILLT…PYLF). Residues 1652-1703 (NPAGFEWQKVVEDFKEWTNWLFYRGGIGVKGAESWEAWWEEELSHIRTLSGR) lie on the Extracellular side of the membrane. Residues 1704 to 1724 (IMETILSLRFFIFQYGIVYKL) form a helical membrane-spanning segment. The Cytoplasmic portion of the chain corresponds to 1725 to 1732 (KLQGSDTS). Residues 1733–1753 (FAVYGWSWVAFAMIIVLFKVF) traverse the membrane as a helical segment. At 1754–1768 (TFSQKISVNFQLLLR) the chain is on the extracellular side. Residues 1769 to 1789 (FIQGLSLLMALAGIIVAVVLT) traverse the membrane as a helical segment. The Cytoplasmic segment spans residues 1790–1795 (PLSVTD). Residues 1796–1816 (IFACVLAFIPTGWGILSIACA) traverse the membrane as a helical segment. At 1817 to 1838 (WKPVLKRMGMWKSIRSLARLYD) the chain is on the extracellular side. Residues 1839–1859 (ALMGMLIFLPVALCSWFPFVS) form a helical membrane-spanning segment. Residues 1860 to 1890 (TFQTRMMFNQAFSRGLEISLILAGDNPNSGL) are Cytoplasmic-facing.

This sequence belongs to the glycosyltransferase 48 family.

The protein localises to the cell membrane. It catalyses the reaction [(1-&gt;3)-beta-D-glucosyl](n) + UDP-alpha-D-glucose = [(1-&gt;3)-beta-D-glucosyl](n+1) + UDP + H(+). In terms of biological role, involved in sporophytic and gametophytic development. Required for normal plant development. During pollen formation, required for the entry of microspores into mitosis and microspore symmetric division. May be required for correct temporal and spatial control of callose deposition during pollen mitosis. During plant growth and development, callose is found as a transitory component of the cell plate in dividing cells, is a major component of pollen mother cell walls and pollen tubes, and is found as a structural component of plasmodesmatal canals. This Arabidopsis thaliana (Mouse-ear cress) protein is Callose synthase 9 (CALS9).